The following is a 203-amino-acid chain: E3 ubiquitin-protein ligase RNF152 (203 aa).

Residues 12 to 55 (CQICFNYYSPRRRPKLLDCKHTCCSVCLQQMRTSQKDVRCPWCR) form an RING-type zinc finger. The necessary for interaction with RRAGA stretch occupies residues 106 to 165 (ISKERTLLPGDMGCRLLPGSQQKSLTVVTIPAEQQPLQGGAPPEAVEEEPDRRGVVKSST). The disordered stretch occupies residues 139–158 (QQPLQGGAPPEAVEEEPDRR). The helical transmembrane segment at 167–187 (SGVCTVILVACVLVFLLGIVL) threads the bilayer.

It belongs to the RNF152 family. Interacts with RRAGA (inactive GDP-bound form); stimulated by amino acid starvation. Interacts with SEC16A. In terms of processing, ubiquitinated. Autoubiquitinated in vitro, leading to its degradation by the proteasome.

It localises to the lysosome membrane. It catalyses the reaction S-ubiquitinyl-[E2 ubiquitin-conjugating enzyme]-L-cysteine + [acceptor protein]-L-lysine = [E2 ubiquitin-conjugating enzyme]-L-cysteine + N(6)-ubiquitinyl-[acceptor protein]-L-lysine.. Its pathway is protein modification; protein ubiquitination. Functionally, E3 ubiquitin-protein ligase that acts as a negative regulator of mTORC1 signaling by mediating ubiquitination of RagA/RRAGA and RHEB. Catalyzes 'Lys-63'-linked polyubiquitination of RagA/RRAGA in response to amino acid starvation, thereby regulating mTORC1 signaling. Also mediates monoubiquitination of RHEB, promoting its association with the TSC-TBC complex and subsequent inhibition. Also mediates 'Lys-48'-linked polyubiquitination of target proteins and their subsequent targeting to the proteasome for degradation. Induces apoptosis when overexpressed. This Mus musculus (Mouse) protein is E3 ubiquitin-protein ligase RNF152.